The primary structure comprises 383 residues: Putative 8-amino-7-oxononanoate synthase (383 aa).

Arg-22 contacts substrate. A pyridoxal 5'-phosphate-binding site is contributed by 109–110; the sequence is GY. His-134 is a substrate binding site. Pyridoxal 5'-phosphate is bound by residues Ser-182, 207–210, and 236–239; these read DDAH and TLSK. Residue Lys-239 is modified to N6-(pyridoxal phosphate)lysine. Residue Thr-348 coordinates substrate.

It belongs to the class-II pyridoxal-phosphate-dependent aminotransferase family. BioF subfamily. As to quaternary structure, homodimer. Pyridoxal 5'-phosphate is required as a cofactor.

The catalysed reaction is 6-carboxyhexanoyl-[ACP] + L-alanine + H(+) = (8S)-8-amino-7-oxononanoate + holo-[ACP] + CO2. The protein operates within cofactor biosynthesis; biotin biosynthesis. Catalyzes the decarboxylative condensation of pimeloyl-[acyl-carrier protein] and L-alanine to produce 8-amino-7-oxononanoate (AON), [acyl-carrier protein], and carbon dioxide. This Caulobacter sp. (strain K31) protein is Putative 8-amino-7-oxononanoate synthase (bioF).